Reading from the N-terminus, the 130-residue chain is Phosphoribosyl-AMP cyclohydrolase (130 aa).

Aspartate 74 contributes to the Mg(2+) binding site. Cysteine 75 is a Zn(2+) binding site. Residues aspartate 76 and aspartate 78 each contribute to the Mg(2+) site. 2 residues coordinate Zn(2+): cysteine 91 and cysteine 98.

This sequence belongs to the PRA-CH family. As to quaternary structure, homodimer. It depends on Mg(2+) as a cofactor. Zn(2+) is required as a cofactor.

It is found in the cytoplasm. It carries out the reaction 1-(5-phospho-beta-D-ribosyl)-5'-AMP + H2O = 1-(5-phospho-beta-D-ribosyl)-5-[(5-phospho-beta-D-ribosylamino)methylideneamino]imidazole-4-carboxamide. Its pathway is amino-acid biosynthesis; L-histidine biosynthesis; L-histidine from 5-phospho-alpha-D-ribose 1-diphosphate: step 3/9. Catalyzes the hydrolysis of the adenine ring of phosphoribosyl-AMP. The chain is Phosphoribosyl-AMP cyclohydrolase from Bradyrhizobium sp. (strain ORS 278).